Consider the following 323-residue polypeptide: Quinolinate synthase (323 aa).

Residues histidine 37 and serine 54 each coordinate iminosuccinate. Cysteine 99 is a binding site for [4Fe-4S] cluster. Residues tyrosine 125–asparagine 127 and serine 142 each bind iminosuccinate. [4Fe-4S] cluster is bound at residue cysteine 185. Residues histidine 211–glutamate 213 and threonine 228 each bind iminosuccinate. A [4Fe-4S] cluster-binding site is contributed by cysteine 278.

Belongs to the quinolinate synthase family. Type 2 subfamily. [4Fe-4S] cluster serves as cofactor.

It localises to the cytoplasm. The catalysed reaction is iminosuccinate + dihydroxyacetone phosphate = quinolinate + phosphate + 2 H2O + H(+). The protein operates within cofactor biosynthesis; NAD(+) biosynthesis; quinolinate from iminoaspartate: step 1/1. Functionally, catalyzes the condensation of iminoaspartate with dihydroxyacetone phosphate to form quinolinate. This chain is Quinolinate synthase, found in Trichodesmium erythraeum (strain IMS101).